A 219-amino-acid chain; its full sequence is MQHTDDMVQERRGMVELLRRYGIRNSRVLDAFLTVKRHLFVDGESRMFAYHDSALPIGFGQTISQPYTVAYMMELLVENCSSGKVLEIGTGSGFQAAILDALGYRVFTIECVAGLYELASARFEKLGIPVQSRLGDGTLGWPEEAPFDAIIVTAAAPHEPRELMSQLADGGVLILPLGSLASQQMTVIRRKGNRFEHEGFDHFAFVPLLGREGWPDSDE.

Ser64 is a catalytic residue.

The protein belongs to the methyltransferase superfamily. L-isoaspartyl/D-aspartyl protein methyltransferase family.

The protein localises to the cytoplasm. The catalysed reaction is [protein]-L-isoaspartate + S-adenosyl-L-methionine = [protein]-L-isoaspartate alpha-methyl ester + S-adenosyl-L-homocysteine. In terms of biological role, catalyzes the methyl esterification of L-isoaspartyl residues in peptides and proteins that result from spontaneous decomposition of normal L-aspartyl and L-asparaginyl residues. It plays a role in the repair and/or degradation of damaged proteins. This chain is Protein-L-isoaspartate O-methyltransferase, found in Chlorobaculum parvum (strain DSM 263 / NCIMB 8327) (Chlorobium vibrioforme subsp. thiosulfatophilum).